The primary structure comprises 78 residues: Small ribosomal subunit protein bS18 (78 aa).

It belongs to the bacterial ribosomal protein bS18 family. In terms of assembly, part of the 30S ribosomal subunit. Forms a tight heterodimer with protein bS6.

Binds as a heterodimer with protein bS6 to the central domain of the 16S rRNA, where it helps stabilize the platform of the 30S subunit. The protein is Small ribosomal subunit protein bS18 of Lactobacillus johnsonii (strain CNCM I-12250 / La1 / NCC 533).